The sequence spans 344 residues: Phenylalanine--tRNA ligase alpha subunit (344 aa).

Glu257 is a Mg(2+) binding site.

This sequence belongs to the class-II aminoacyl-tRNA synthetase family. Phe-tRNA synthetase alpha subunit type 1 subfamily. As to quaternary structure, tetramer of two alpha and two beta subunits. The cofactor is Mg(2+).

The protein localises to the cytoplasm. It carries out the reaction tRNA(Phe) + L-phenylalanine + ATP = L-phenylalanyl-tRNA(Phe) + AMP + diphosphate + H(+). The polypeptide is Phenylalanine--tRNA ligase alpha subunit (Chlorobium chlorochromatii (strain CaD3)).